We begin with the raw amino-acid sequence, 366 residues long: Chorismate synthase (366 aa).

Residues Arg-48 and Arg-54 each contribute to the NADP(+) site. Residues 129-131, 241-242, Gly-290, 305-309, and Arg-331 each bind FMN; these read RSS, NA, and KPTSS.

The protein belongs to the chorismate synthase family. In terms of assembly, homotetramer. It depends on FMNH2 as a cofactor.

The enzyme catalyses 5-O-(1-carboxyvinyl)-3-phosphoshikimate = chorismate + phosphate. The protein operates within metabolic intermediate biosynthesis; chorismate biosynthesis; chorismate from D-erythrose 4-phosphate and phosphoenolpyruvate: step 7/7. Its function is as follows. Catalyzes the anti-1,4-elimination of the C-3 phosphate and the C-6 proR hydrogen from 5-enolpyruvylshikimate-3-phosphate (EPSP) to yield chorismate, which is the branch point compound that serves as the starting substrate for the three terminal pathways of aromatic amino acid biosynthesis. This reaction introduces a second double bond into the aromatic ring system. The chain is Chorismate synthase from Nitrobacter hamburgensis (strain DSM 10229 / NCIMB 13809 / X14).